Reading from the N-terminus, the 351-residue chain is Photosystem II D2 protein (351 aa).

The chain crosses the membrane as a helical span at residues 39 to 59 (CSYLALGAWFTGTTFVTSWYT). His116 contacts chlorophyll a. The chain crosses the membrane as a helical span at residues 123-139 (GFCLRQFEIARLVGIRP). Residues Gln128 and Asn141 each coordinate pheophytin a. Residues 151–164 (VFVSVFLIYPLGQA) traverse the membrane as a helical segment. His196 serves as a coordination point for chlorophyll a. A helical membrane pass occupies residues 206-226 (GALLCAIHGATVENTLFEDGE). Residues His213 and Phe260 each coordinate a plastoquinone. Fe cation is bound at residue His213. His267 contributes to the Fe cation binding site. Residues 277–293 (GLWTSSIGIIGLALNLR) traverse the membrane as a helical segment.

Belongs to the reaction center PufL/M/PsbA/D family. In terms of assembly, PSII is composed of 1 copy each of membrane proteins PsbA, PsbB, PsbC, PsbD, PsbE, PsbF, PsbH, PsbI, PsbJ, PsbK, PsbL, PsbM, PsbT, PsbY, PsbZ, Psb30/Ycf12, at least 3 peripheral proteins of the oxygen-evolving complex and a large number of cofactors. It forms dimeric complexes. Requires The D1/D2 heterodimer binds P680, chlorophylls that are the primary electron donor of PSII, and subsequent electron acceptors. It shares a non-heme iron and each subunit binds pheophytin, quinone, additional chlorophylls, carotenoids and lipids. There is also a Cl(-1) ion associated with D1 and D2, which is required for oxygen evolution. The PSII complex binds additional chlorophylls, carotenoids and specific lipids. as cofactor.

It localises to the plastid. The protein resides in the chloroplast thylakoid membrane. The catalysed reaction is 2 a plastoquinone + 4 hnu + 2 H2O = 2 a plastoquinol + O2. Its function is as follows. Photosystem II (PSII) is a light-driven water:plastoquinone oxidoreductase that uses light energy to abstract electrons from H(2)O, generating O(2) and a proton gradient subsequently used for ATP formation. It consists of a core antenna complex that captures photons, and an electron transfer chain that converts photonic excitation into a charge separation. The D1/D2 (PsbA/PsbD) reaction center heterodimer binds P680, the primary electron donor of PSII as well as several subsequent electron acceptors. D2 is needed for assembly of a stable PSII complex. In Galdieria sulphuraria (Red alga), this protein is Photosystem II D2 protein.